Reading from the N-terminus, the 343-residue chain is Lumican (343 aa).

The N-terminal stretch at 1–18 (MTLNSLPIFLVLISGIFC) is a signal peptide. Position 19 is a pyrrolidone carboxylic acid (glutamine 19). Tyrosine 20 and tyrosine 22 each carry sulfotyrosine. In terms of domain architecture, LRRNT spans 31 to 69 (DPFGPSTAVCAPECNCPLSYPTAMYCDNLKLKTIPIVPS). LRR repeat units follow at residues 70–91 (GIKY…TFDN), 94–117 (DLQW…VFSK), 120–140 (NLKK…PLPK), 141–162 (TLDD…ALEG), 165–186 (NLTV…GAFK), 190–211 (SLLY…LPHS), 212–232 (LLML…YFQG), and 235–255 (TLQY…PGNV). Asparagine 91 carries N-linked (GlcNAc...) (keratan sulfate) asparagine glycosylation. N-linked (GlcNAc...) (keratan sulfate) asparagine glycosylation is present at asparagine 130. N-linked (GlcNAc...) (keratan sulfate) asparagine glycosylation is present at asparagine 165. Asparagine 257 is a glycosylation site (N-linked (GlcNAc...) (keratan sulfate) asparagine). LRR repeat units lie at residues 260 to 281 (SLVE…SENL), 282 to 301 (ENFY…SFCK), and 310 to 330 (KITH…PQEM). Cysteine 300 and cysteine 333 are disulfide-bonded. A glycan (N-linked (GlcNAc...) asparagine) is linked at asparagine 320.

It belongs to the small leucine-rich proteoglycan (SLRP) family. SLRP class II subfamily. As to quaternary structure, binds to laminin. In terms of processing, contains keratan sulfate. As to expression, cornea and other tissues.

Its subcellular location is the secreted. It is found in the extracellular space. The protein localises to the extracellular matrix. The polypeptide is Lumican (LUM) (Gallus gallus (Chicken)).